We begin with the raw amino-acid sequence, 253 residues long: MANLGCWMLVLFVATWSDLGLCKKRPKPGGWNTGGSRYPGQGSPGGNRYPPQGGGGWGQPHGGGWGQPHGGGWGQPHGGGWGQPHGGGWGQGGGTHSQWNKPSKPKTNMKHMAGAAAAGAVVGGLGGYMLGSAMSRPIIHFGSDYEDRYYRENMHRYPNQVYYRPMDQYSNQNNFVHDCVNITIKQHTVTTTTKGENFTETDVKMMERVVEQMCITQYERESQAYYQRGSSMVLFSSPPVILLISFLIFLIVG.

The first 22 residues, 1–22 (MANLGCWMLVLFVATWSDLGLC), serve as a signal peptide directing secretion. Residues 23 to 38 (KKRPKPGGWNTGGSRY) are interaction with ADGRG6. The segment at 23–230 (KKRPKPGGWN…ESQAYYQRGS (208 aa)) is interaction with GRB2, ERI3 and SYN1. The tract at residues 26–108 (PKPGGWNTGG…WNKPSKPKTN (83 aa)) is disordered. 5 tandem repeats follow at residues 51-59 (PQGGGGWGQ), 60-67 (PHGGGWGQ), 68-75 (PHGGGWGQ), 76-83 (PHGGGWGQ), and 84-91 (PHGGGWGQ). Residues 51–91 (PQGGGGWGQPHGGGWGQPHGGGWGQPHGGGWGQPHGGGWGQ) form a 5 X 8 AA tandem repeats of P-H-G-G-G-W-G-Q region. Residues 52 to 95 (QGGGGWGQPHGGGWGQPHGGGWGQPHGGGWGQPHGGGWGQGGGT) show a composition bias toward gly residues. Positions 61, 62, 63, 69, 70, 71, 77, 78, 79, 85, 86, and 87 each coordinate Cu(2+). A disulfide bridge links Cys-179 with Cys-214. N-linked (GlcNAc...) asparagine glycans are attached at residues Asn-181 and Asn-197. Ser-230 carries the GPI-anchor amidated serine lipid modification. A propeptide spans 231-253 (SMVLFSSPPVILLISFLIFLIVG) (removed in mature form).

Belongs to the prion family. Monomer and homodimer. Has a tendency to aggregate into amyloid fibrils containing a cross-beta spine, formed by a steric zipper of superposed beta-strands. Soluble oligomers may represent an intermediate stage on the path to fibril formation. Copper binding may promote oligomerization. Interacts with GRB2, APP, ERI3/PRNPIP and SYN1. Mislocalized cytosolically exposed PrP interacts with MGRN1; this interaction alters MGRN1 subcellular location and causes lysosomal enlargement. Interacts with APP. Interacts with KIAA1191. Interacts with ADGRG6.

Its subcellular location is the cell membrane. It is found in the golgi apparatus. Its function is as follows. Its primary physiological function is unclear. May play a role in neuronal development and synaptic plasticity. May be required for neuronal myelin sheath maintenance. May promote myelin homeostasis through acting as an agonist for ADGRG6 receptor. May play a role in iron uptake and iron homeostasis. Soluble oligomers are toxic to cultured neuroblastoma cells and induce apoptosis (in vitro). Association with GPC1 (via its heparan sulfate chains) targets PRNP to lipid rafts. Also provides Cu(2+) or Zn(2+) for the ascorbate-mediated GPC1 deaminase degradation of its heparan sulfate side chains. The sequence is that of Major prion protein (PRNP) from Gorilla gorilla gorilla (Western lowland gorilla).